The following is a 371-amino-acid chain: S-adenosylmethionine:tRNA ribosyltransferase-isomerase (371 aa).

The protein belongs to the QueA family. Monomer.

It is found in the cytoplasm. The catalysed reaction is 7-aminomethyl-7-carbaguanosine(34) in tRNA + S-adenosyl-L-methionine = epoxyqueuosine(34) in tRNA + adenine + L-methionine + 2 H(+). The protein operates within tRNA modification; tRNA-queuosine biosynthesis. Its function is as follows. Transfers and isomerizes the ribose moiety from AdoMet to the 7-aminomethyl group of 7-deazaguanine (preQ1-tRNA) to give epoxyqueuosine (oQ-tRNA). This Nitratidesulfovibrio vulgaris (strain DP4) (Desulfovibrio vulgaris) protein is S-adenosylmethionine:tRNA ribosyltransferase-isomerase.